A 323-amino-acid polypeptide reads, in one-letter code: L-lactate dehydrogenase 1 (323 aa).

Residues Val18, Asp39, Tyr69, and 83–84 (GA) contribute to the NAD(+) site. Residues Gln86 and Arg92 each contribute to the substrate site. NAD(+) contacts are provided by residues Ser105, 122–124 (VAN), and Ser147. 124-127 (NPVD) serves as a coordination point for substrate. 152 to 155 (DTGR) contacts substrate. The Proton acceptor role is filled by His179. Tyr223 is subject to Phosphotyrosine. Thr232 contacts substrate.

Belongs to the LDH/MDH superfamily. LDH family. In terms of assembly, homotetramer.

It localises to the cytoplasm. The enzyme catalyses (S)-lactate + NAD(+) = pyruvate + NADH + H(+). Its pathway is fermentation; pyruvate fermentation to lactate; (S)-lactate from pyruvate: step 1/1. Catalyzes the conversion of lactate to pyruvate. The sequence is that of L-lactate dehydrogenase 1 from Lactobacillus acidophilus (strain ATCC 700396 / NCK56 / N2 / NCFM).